Reading from the N-terminus, the 257-residue chain is Putative aldolase class 2 protein CC_1201 (257 aa).

Residues His-114, His-116, and His-177 each contribute to the Zn(2+) site.

It belongs to the aldolase class II family. It depends on Zn(2+) as a cofactor.

The polypeptide is Putative aldolase class 2 protein CC_1201 (Caulobacter vibrioides (strain ATCC 19089 / CIP 103742 / CB 15) (Caulobacter crescentus)).